Consider the following 244-residue polypeptide: Na(+)-translocating NADH-quinone reductase subunit E (244 aa).

6 helical membrane-spanning segments follow: residues 11-31 (LLGIFLQATFIQNILLSTFLG), 50-70 (MSVALVLTITGSINWLVHYFI), 90-110 (FLELIMFIVVIAAFTQILEVL), 123-143 (GIFLPLIAVNCAILGGVLFGI), 153-173 (VVFSLGSGCGWWLAIVLFATI), and 191-211 (ISFITTGLMAMAFMGLTGIDI). The segment covering 222 to 236 (VTNIATDSPQPNTHS) has biased composition (polar residues). Positions 222 to 244 (VTNIATDSPQPNTHSSSEEPKAS) are disordered.

The protein belongs to the NqrDE/RnfAE family. As to quaternary structure, composed of six subunits; NqrA, NqrB, NqrC, NqrD, NqrE and NqrF.

The protein localises to the cell inner membrane. The catalysed reaction is a ubiquinone + n Na(+)(in) + NADH + H(+) = a ubiquinol + n Na(+)(out) + NAD(+). In terms of biological role, NQR complex catalyzes the reduction of ubiquinone-1 to ubiquinol by two successive reactions, coupled with the transport of Na(+) ions from the cytoplasm to the periplasm. NqrA to NqrE are probably involved in the second step, the conversion of ubisemiquinone to ubiquinol. The protein is Na(+)-translocating NADH-quinone reductase subunit E of Chlamydia trachomatis serovar A (strain ATCC VR-571B / DSM 19440 / HAR-13).